A 670-amino-acid chain; its full sequence is ATP synthase subunit alpha 2 (670 aa).

180–187 lines the ATP pocket; the sequence is GDRATGKT. The tract at residues 527–670 is disordered; the sequence is AEDAAGDIGG…DAEAEARHKR (144 aa). Residues 543–588 are compositionally biased toward basic and acidic residues; that stretch reads ARGDADRDADHGANREVSREVSPEASREVSREVSREVSHEADRDAA. Positions 589 to 599 are enriched in low complexity; that stretch reads ADAARVAGRAP. The span at 621–639 shows a compositional bias: basic and acidic residues; it reads ADGDRASASRPRPDARGDA. Low complexity predominate over residues 640-661; sequence ARTAPSPQGGAEVNVNAAANVD.

This sequence belongs to the ATPase alpha/beta chains family. As to quaternary structure, F-type ATPases have 2 components, CF(1) - the catalytic core - and CF(0) - the membrane proton channel. CF(1) has five subunits: alpha(3), beta(3), gamma(1), delta(1), epsilon(1). CF(0) has three main subunits: a(1), b(2) and c(9-12). The alpha and beta chains form an alternating ring which encloses part of the gamma chain. CF(1) is attached to CF(0) by a central stalk formed by the gamma and epsilon chains, while a peripheral stalk is formed by the delta and b chains.

It localises to the cell inner membrane. It catalyses the reaction ATP + H2O + 4 H(+)(in) = ADP + phosphate + 5 H(+)(out). Its function is as follows. Produces ATP from ADP in the presence of a proton gradient across the membrane. The alpha chain is a regulatory subunit. This Burkholderia pseudomallei (strain 668) protein is ATP synthase subunit alpha 2.